We begin with the raw amino-acid sequence, 154 residues long: Oleosin 16.4 kDa (154 aa).

Residue alanine 2 is modified to N-acetylalanine. Positions 2 to 33 (ADRDRSYRTFDQVVRGDRTNYQSGPSTTQVLT) are polar. Transmembrane regions (helical) follow at residues 31 to 51 (VLTVLTLLPIGGTLLALAGLT), 65 to 85 (LFVIFSPVLVPAAIAVFMAVA), and 86 to 106 (GFLSSGAFGLTGLSSLSYVFN). The segment at 34 to 105 (VLTLLPIGGT…TGLSSLSYVF (72 aa)) is hydrophobic.

The protein belongs to the oleosin family.

It is found in the lipid droplet. It localises to the membrane. Functionally, may have a structural role to stabilize the lipid body during desiccation of the seed by preventing coalescence of the oil. Probably interacts with both lipid and phospholipid moieties of lipid bodies. May also provide recognition signals for specific lipase anchorage in lipolysis during seedling growth. The sequence is that of Oleosin 16.4 kDa (MATP7) from Gossypium hirsutum (Upland cotton).